The following is a 365-amino-acid chain: Hematopoietic SH2 domain-containing protein homolog (365 aa).

Residues 34 to 125 (WFHGIISRKA…PYNELLTVAC (92 aa)) enclose the SH2 domain. Disordered regions lie at residues 199 to 278 (QSTD…QQKP) and 335 to 365 (AEHP…APGY). Residues 257–277 (QQITPNTPNEGRTQQKNQQQK) are compositionally biased toward polar residues.

May be an adapter protein involved in tyrosine kinase signaling. The polypeptide is Hematopoietic SH2 domain-containing protein homolog (hsh2d) (Danio rerio (Zebrafish)).